A 230-amino-acid polypeptide reads, in one-letter code: Large ribosomal subunit protein uL1 (230 aa).

The protein belongs to the universal ribosomal protein uL1 family. In terms of assembly, part of the 50S ribosomal subunit.

Binds directly to 23S rRNA. The L1 stalk is quite mobile in the ribosome, and is involved in E site tRNA release. Functionally, protein L1 is also a translational repressor protein, it controls the translation of the L11 operon by binding to its mRNA. The sequence is that of Large ribosomal subunit protein uL1 from Thermoanaerobacter sp. (strain X514).